We begin with the raw amino-acid sequence, 40 residues long: Small polypeptide DEVIL 6 (40 aa).

A required for DVL/RTFL small polypeptide activity region spans residues 9–40 (SSSRGLGGVLREQRAKLYIIKRCVVMLLCWQD). A helical transmembrane segment spans residues 12 to 28 (RGLGGVLREQRAKLYII).

It belongs to the DVL/RTFL small polypeptides family.

Its subcellular location is the cell membrane. Its function is as follows. Small polypeptide acting as a regulatory molecule which coordinates cellular responses required for differentiation, growth and development, probably by restricting polar cell proliferation in lateral organs and coordinating socket cell recruitment and differentiation at trichome sites. This chain is Small polypeptide DEVIL 6, found in Arabidopsis thaliana (Mouse-ear cress).